Consider the following 269-residue polypeptide: Aquaporin-1 (269 aa).

The Cytoplasmic portion of the chain corresponds to 1 to 11 (MASEFKKKLFW). Residues 12–29 (RAVVAEFLAMTLFVFISI) form a helical membrane-spanning segment. Over 30-46 (GSALGFKYPVGNNQTAV) the chain is Extracellular. Asn42 is a glycosylation site (N-linked (GlcNAc...) asparagine). Residues 47-65 (QDNVKVSLAFGLSIATLAQ) form a helical membrane-spanning segment. Topologically, residues 66 to 68 (SVG) are cytoplasmic. The stretch at 69-82 (HISGAHLNPAVTLG) is an intramembrane region. The short motif at 76 to 78 (NPA) is the NPA 1 element. At 83–90 (LLLSCQIS) the chain is on the cytoplasmic side. A helical membrane pass occupies residues 91–109 (IFRALMYIIAQCVGAIVAT). Over 110-133 (AILSGITSSLPGNSLGRNDLADGV) the chain is Extracellular. The chain crosses the membrane as a helical span at residues 134 to 153 (NSGQGLGIEIIGTLQLVLCV). Over 154–163 (LATTDRRRRD) the chain is Cytoplasmic. A helical membrane pass occupies residues 164 to 181 (LGGSAPLAIGLSVALGHL). Residues 182–186 (LAIDY) are Extracellular-facing. Residues 187-199 (TGCGINPARSFGS) lie within the membrane without spanning it. The NPA 2 motif lies at 192–194 (NPA). Residues 200 to 206 (AVITHNF) are Extracellular-facing. N-linked (GlcNAc...) asparagine glycosylation is present at Asn205. Residues 207–224 (SNHWIFWVGPFIGGALAV) form a helical membrane-spanning segment. The Cytoplasmic segment spans residues 225-269 (LIYDFILAPRSSDFTDRVKVWTSGQVEEYDLDADDINSRVEMKPK). At Ser247 the chain carries Phosphoserine. Tyr253 carries the phosphotyrosine modification. Ser262 carries the post-translational modification Phosphoserine.

It belongs to the MIP/aquaporin (TC 1.A.8) family. In terms of assembly, homotetramer; each monomer provides an independent water pore. Component of the ankyrin-1 complex in the erythrocyte, composed of ANK1, RHCE, RHAG, SLC4A1, EPB42, GYPA, GYPB and AQP1. Interacts with EPHB2; involved in endolymph production in the inner ear. Identified in a complex with STOM. Interacts (via the N-terminal) with ANK1 (via ANK 1-5 repeats). Interacts (via the C-terminal) with EPB42.

The protein localises to the cell membrane. It catalyses the reaction H2O(in) = H2O(out). The enzyme catalyses nitric oxide(out) = nitric oxide(in). The catalysed reaction is CO2(out) = CO2(in). It carries out the reaction glycerol(in) = glycerol(out). It catalyses the reaction H2O2(out) = H2O2(in). The enzyme catalyses K(+)(in) = K(+)(out). The catalysed reaction is Na(+)(in) = Na(+)(out). Functionally, forms a water channel that facilitates the transport of water across cell membranes, playing a crucial role in water homeostasis in various tissues. Could also be permeable to small solutes including hydrogen peroxide, glycerol and gases such as amonnia (NH3), nitric oxide (NO) and carbon dioxide (CO2). Recruited to the ankyrin-1 complex, a multiprotein complex of the erythrocyte membrane, it could be part of a CO2 metabolon, linking facilitated diffusion of CO2 across the membrane, anion exchange of Cl(-)/HCO3(-) and interconversion of dissolved CO2 and carbonic acid in the cytosol. In vitro, it shows non-selective gated cation channel activity and may be permeable to cations like K(+) and Na(+) in vivo. The sequence is that of Aquaporin-1 from Pongo abelii (Sumatran orangutan).